The chain runs to 288 residues: 4-diphosphocytidyl-2-C-methyl-D-erythritol kinase (288 aa).

The active site involves lysine 22. Residue 104-114 participates in ATP binding; sequence PSQAGLGGGSS. Aspartate 146 is a catalytic residue.

Belongs to the GHMP kinase family. IspE subfamily.

The enzyme catalyses 4-CDP-2-C-methyl-D-erythritol + ATP = 4-CDP-2-C-methyl-D-erythritol 2-phosphate + ADP + H(+). Its pathway is isoprenoid biosynthesis; isopentenyl diphosphate biosynthesis via DXP pathway; isopentenyl diphosphate from 1-deoxy-D-xylulose 5-phosphate: step 3/6. Its function is as follows. Catalyzes the phosphorylation of the position 2 hydroxy group of 4-diphosphocytidyl-2C-methyl-D-erythritol. The protein is 4-diphosphocytidyl-2-C-methyl-D-erythritol kinase of Protochlamydia amoebophila (strain UWE25).